The following is a 933-amino-acid chain: Serine/threonine-protein kinase PknD (933 aa).

One can recognise a Protein kinase domain in the interval 4–291; it reads YDIIRMIGKG…ALKADIEQHL (288 aa). Residues 10-18 and Lys-33 contribute to the ATP site; that span reads IGKGGMGEV. Asp-138 functions as the Proton acceptor in the catalytic mechanism.

Belongs to the protein kinase superfamily. Ser/Thr protein kinase family. In terms of processing, autophosphorylated on serine and threonine residues.

It catalyses the reaction L-seryl-[protein] + ATP = O-phospho-L-seryl-[protein] + ADP + H(+). The catalysed reaction is L-threonyl-[protein] + ATP = O-phospho-L-threonyl-[protein] + ADP + H(+). Together with the serine/threonine kinase Pkn1, may play a role in the specific interactions with host proteins during intracellular growth. In Chlamydia abortus (strain DSM 27085 / S26/3) (Chlamydophila abortus), this protein is Serine/threonine-protein kinase PknD.